Here is a 334-residue protein sequence, read N- to C-terminus: NADH dehydrogenase (ubiquinone) complex I, assembly factor 6 homolog (334 aa).

The transit peptide at 1–11 (MRRLVRNWNCR) directs the protein to the mitochondrion.

Belongs to the NDUFAF6 family. In terms of assembly, associates with mitochondrial complex I assembly intermediates during its biogenesis. Forms a complex including sicily, ND-42 and Hsp83; the complex is necessary to chaperone ND-42 in the cytoplasm before mitochondrial import; the interaction between sicily and ND-42 is direct and occurs preferably between the unprocessed forms in the cytoplasm; the interaction with Hsp83 is direct. Interacts with ND-30; interaction is stronger between the unprocessed forms in the cytoplasm. In terms of tissue distribution, expressed in the ventral nerve cord, larval brain, motor neuron axons, imaginal disks, and muscles (at protein level).

The protein localises to the mitochondrion inner membrane. The protein resides in the cytoplasm. It is found in the cytosol. Functionally, involved in the assembly of mitochondrial NADH:ubiquinone oxidoreductase complex (Complex I) at early stages. Interacts with cytosolic Hsp90 to chaperone the Complex I subunit ND-42 in the cytoplasm. This is NADH dehydrogenase (ubiquinone) complex I, assembly factor 6 homolog from Drosophila melanogaster (Fruit fly).